We begin with the raw amino-acid sequence, 191 residues long: Ribosomal RNA small subunit methyltransferase G (191 aa).

S-adenosyl-L-methionine is bound by residues G62, F67, 111–112 (IE), and R124.

The protein belongs to the methyltransferase superfamily. RNA methyltransferase RsmG family.

Its subcellular location is the cytoplasm. It carries out the reaction guanosine(527) in 16S rRNA + S-adenosyl-L-methionine = N(7)-methylguanosine(527) in 16S rRNA + S-adenosyl-L-homocysteine. Its function is as follows. Specifically methylates the N7 position of guanine in position 527 of 16S rRNA. The polypeptide is Ribosomal RNA small subunit methyltransferase G (Rickettsia akari (strain Hartford)).